The sequence spans 331 residues: MPSLDDILKPVAEAVKNGKKVTFFNGAGISTGAGIPDFRSPDTGLYANLAKLNLPFAEAVFDIDFFKEDPKPFYTLAEELYPGNFAPTKFHHFIKLLQDQGSLKRVYTQNIDTLERLAGVEDKYIVEAHGSFASNHCVDCHKEMTTETLKTYMKDKKIPSCQHCEGYVKPDIVFFGEGLPVKFFDLWEDDCEDVEVAIVAGTSLTVFPFASLPGEVNKKCLRVLVNKEKVGTFKHEPRKSDIIALHDCDIVAEKLCTLLGLDDKLNEVYEKEKIKYSKAETKETKMHEIEDKLKEEAHLKEDKHTTKVDKKEKQNDANDKELEQLIDKLKI.

The Deacetylase sirtuin-type domain maps to 1 to 262; that stretch reads MPSLDDILKP…EKLCTLLGLD (262 aa). Residues 26–46 and 109–112 each bind NAD(+); these read GAGISTGAGIPDFRSPDTGLY and QNID. The Proton acceptor role is filled by His129. Residues Cys137, Cys140, Cys161, and Cys164 each coordinate Zn(2+). NAD(+)-binding positions include 201-203, 226-228, and Cys248; these read GTS and NKE. Positions 276 to 331 form a coiled coil; it reads YSKAETKETKMHEIEDKLKEEAHLKEDKHTTKVDKKEKQNDANDKELEQLIDKLKI. The tract at residues 283 to 319 is disordered; it reads ETKMHEIEDKLKEEAHLKEDKHTTKVDKKEKQNDAND.

Belongs to the sirtuin family. Class I subfamily. The cofactor is Zn(2+).

The protein resides in the cytoplasm. Its subcellular location is the nucleus. It carries out the reaction N(6)-acetyl-L-lysyl-[protein] + NAD(+) + H2O = 2''-O-acetyl-ADP-D-ribose + nicotinamide + L-lysyl-[protein]. Functionally, NAD-dependent histone deacetylase that is involved in nuclear silencing events. Derepresses subtelomeric silencing and increases repression in nucleolar (rDNA) silencing. Its function is negatively regulated by active nuclear export. In Candida albicans (strain SC5314 / ATCC MYA-2876) (Yeast), this protein is NAD-dependent protein deacetylase HST2 (HST2).